The following is a 308-amino-acid chain: Ribosomal protein L11 methyltransferase (308 aa).

S-adenosyl-L-methionine is bound by residues Thr148, Gly169, Asp191, and Asn239.

This sequence belongs to the methyltransferase superfamily. PrmA family.

Its subcellular location is the cytoplasm. It catalyses the reaction L-lysyl-[protein] + 3 S-adenosyl-L-methionine = N(6),N(6),N(6)-trimethyl-L-lysyl-[protein] + 3 S-adenosyl-L-homocysteine + 3 H(+). Functionally, methylates ribosomal protein L11. This Psychrobacter cryohalolentis (strain ATCC BAA-1226 / DSM 17306 / VKM B-2378 / K5) protein is Ribosomal protein L11 methyltransferase.